Here is a 416-residue protein sequence, read N- to C-terminus: Cysteate synthase (416 aa).

K104 is modified (N6-(pyridoxal phosphate)lysine). Position 130 (N130) interacts with pyridoxal 5'-phosphate.

Belongs to the threonine synthase family. Cysteate synthase subfamily. As to quaternary structure, homotrimer. Requires pyridoxal 5'-phosphate as cofactor.

The catalysed reaction is O-phospho-L-serine + sulfite + H(+) = L-cysteate + phosphate. Its pathway is cofactor biosynthesis; coenzyme M biosynthesis. Is inhibited by AP3 (DL-2-amino-3-phosphonopropionate) and, to a lesser extent, by L-aspartate or AP4 (DL-2-amino-4-phosphonobutyrate). Is also inhibited by EDTA in vitro. Its function is as follows. Specifically catalyzes the beta-elimination of phosphate from L-phosphoserine and the beta-addition of sulfite to the dehydroalanine intermediate to produce L-cysteate. Does not display threonine synthase activity like the paralog protein ThrC. The protein is Cysteate synthase of Methanosarcina acetivorans (strain ATCC 35395 / DSM 2834 / JCM 12185 / C2A).